The following is a 587-amino-acid chain: MATPPYPEDEHSRQAYVDQLGLLEEGADEVFEEILAAATSYFQTPIALISILDHQRQWFRASIGLDIRQTPRRDSFCAYAILGKGVFEVADATLDPRFRDNPYVQGEPRIRFYAGAPLATAEGLNLGSLCVIDREPRGPLAERDVAMLEHFARLVMARIHTLRSTNYIDEPTGLYNRLRLQEDVSLRLQRDGALTVIAADLLPLALLNTIIRTLGYPFSNDLMLEARDRIRAELPDFTLYKISPTRFGLLLPRQQQEETESVCLRLLRAFESPVVCRGIPIKANVGLGVLPLADDTLDGDQDWLRLVVSAADDARDRGVGWARYNPPLDQAQQRAFTLLTSLSQAIGTEEGFHLVYQPKIDLPTGRCTGVEALLRWRHPQLGFVSPAEFVPLAEKTALMRPLSDWVLRHAMAQLAQWNARNIPLRLAINVSASDMEDSSFLEEAVRLAKTYDIDLSALELEFTESVLIRDASAVGSVLLRARELGMGIAVDDFGTGYSNWTYLRDLPITAIKLDQSFTRDLAGSPKAQSVTQAVIGLASQLGYRVVAEGIETHDTFHLLQAWGCHEGQGYLIAQPMLPEQLEDWLRR.

One can recognise a GAF domain in the interval aspartate 28–alanine 157. The region spanning glycine 192–proline 327 is the GGDEF domain. The EAL domain maps to alanine 335–arginine 587.

The enzyme catalyses 3',3'-c-di-GMP + H2O = 5'-phosphoguanylyl(3'-&gt;5')guanosine + H(+). Phosphodiesterase (PDE) that catalyzes the hydrolysis of cyclic diguanylate (c-di-GMP) to 5'-pGpG. The sequence is that of Cyclic di-GMP phosphodiesterase PA2567 from Pseudomonas aeruginosa (strain ATCC 15692 / DSM 22644 / CIP 104116 / JCM 14847 / LMG 12228 / 1C / PRS 101 / PAO1).